The chain runs to 289 residues: BTB/POZ domain-containing protein KCTD7 (289 aa).

The segment at 1-42 is disordered; it reads MVVVNGREPDSRHSDGAMSSSEAEDDFLEPATPTATQAGHGL. The region spanning 53–141 is the BTB domain; sequence VPLNIGGAHF…YAIGPLLEQL (89 aa).

As to quaternary structure, interacts with CUL3.

The protein resides in the cell membrane. The protein localises to the cytoplasm. It is found in the cytosol. In terms of biological role, may be involved in the control of excitability of cortical neurons. The sequence is that of BTB/POZ domain-containing protein KCTD7 (Kctd7) from Rattus norvegicus (Rat).